A 637-amino-acid chain; its full sequence is Neuroendocrine convertase 2 (637 aa).

The signal sequence occupies residues 1–24; that stretch reads MEGGCGSQWKAAGLLFCVMVFASA. The propeptide occupies 25–108; sequence ERPVFTNHFL…QQEGFDRKKR (84 aa). The 325-residue stretch at 128–452 folds into the Peptidase S8 domain; it reads QWYLFNTGQA…YGVLDAGAMV (325 aa). Catalysis depends on charge relay system residues Asp166 and His207. 2 disulfide bridges follow: Cys224-Cys375 and Cys316-Cys346. Residue Asn374 is glycosylated (N-linked (GlcNAc...) asparagine). The active-site Charge relay system is the Ser383. The P/Homo B domain maps to 460–596; that stretch reads TVPERFHCVG…TLMLHGTQSA (137 aa). Cys467 and Cys493 form a disulfide bridge. N-linked (GlcNAc...) asparagine glycosylation is found at Asn513 and Asn523.

The protein belongs to the peptidase S8 family. Furin subfamily.

Its subcellular location is the cytoplasmic vesicle. It localises to the secretory vesicle. The protein resides in the secreted. The catalysed reaction is Release of protein hormones and neuropeptides from their precursors, generally by hydrolysis of -Lys-Arg-|- bonds.. In terms of biological role, serine endopeptidase which is involved in the processing of hormone and other protein precursors at sites comprised of pairs of basic amino acid residues. Responsible for the release of glucagon from proglucagon in pancreatic A cells. This Rattus norvegicus (Rat) protein is Neuroendocrine convertase 2 (Pcsk2).